The primary structure comprises 187 residues: Transcriptional activator of sulfur metabolism MET28 (187 aa).

The bZIP domain occupies 105–168; that stretch reads DKIKQERRRK…EFWKAKLNDI (64 aa). The segment at 106 to 136 is basic motif; it reads KIKQERRRKNTEASQRFRIRKKQKNFENMNK. The segment at 137-151 is leucine-zipper; it reads LQNLNTQINKLRDRI.

This sequence belongs to the bZIP family. In terms of assembly, interacts with MET4 to form a heteromeric complex which also includes CBF1. Forms two alternate complexes associating MET28 with MET4 and either MET31 or MET32. Binds to DNA through the MET4-MET28-CBF1 complex.

The protein localises to the cytoplasm. Its subcellular location is the nucleus. Functionally, acts as an accessory factor in the activation of sulfur amino acids metabolism genes. Possesses no intrinsic transcription activation abilities. Binds to the MET16 promoter as a complex with MET4 and CBF1. Enhances the DNA-binding activity of CBF1. The chain is Transcriptional activator of sulfur metabolism MET28 (MET28) from Saccharomyces cerevisiae (strain ATCC 204508 / S288c) (Baker's yeast).